The following is a 253-amino-acid chain: Imidazole glycerol phosphate synthase subunit HisF (253 aa).

Active-site residues include D12 and D131.

Belongs to the HisA/HisF family. Heterodimer of HisH and HisF.

The protein resides in the cytoplasm. It catalyses the reaction 5-[(5-phospho-1-deoxy-D-ribulos-1-ylimino)methylamino]-1-(5-phospho-beta-D-ribosyl)imidazole-4-carboxamide + L-glutamine = D-erythro-1-(imidazol-4-yl)glycerol 3-phosphate + 5-amino-1-(5-phospho-beta-D-ribosyl)imidazole-4-carboxamide + L-glutamate + H(+). It participates in amino-acid biosynthesis; L-histidine biosynthesis; L-histidine from 5-phospho-alpha-D-ribose 1-diphosphate: step 5/9. Functionally, IGPS catalyzes the conversion of PRFAR and glutamine to IGP, AICAR and glutamate. The HisF subunit catalyzes the cyclization activity that produces IGP and AICAR from PRFAR using the ammonia provided by the HisH subunit. The protein is Imidazole glycerol phosphate synthase subunit HisF of Corynebacterium urealyticum (strain ATCC 43042 / DSM 7109).